Reading from the N-terminus, the 276-residue chain is Dermonecrotic toxin LsaSicTox-alphaIB2iii (276 aa).

Residue histidine 5 is part of the active site. Mg(2+) contacts are provided by glutamate 25 and aspartate 27. The active-site Nucleophile is histidine 41. 2 disulfide bridges follow: cysteine 45–cysteine 51 and cysteine 47–cysteine 190. Residue aspartate 85 coordinates Mg(2+). 2 N-linked (GlcNAc...) asparagine glycosylation sites follow: asparagine 129 and asparagine 253.

The protein belongs to the arthropod phospholipase D family. Class II subfamily. Mg(2+) serves as cofactor. As to expression, expressed by the venom gland.

It is found in the secreted. The catalysed reaction is an N-(acyl)-sphingosylphosphocholine = an N-(acyl)-sphingosyl-1,3-cyclic phosphate + choline. It carries out the reaction an N-(acyl)-sphingosylphosphoethanolamine = an N-(acyl)-sphingosyl-1,3-cyclic phosphate + ethanolamine. It catalyses the reaction a 1-acyl-sn-glycero-3-phosphocholine = a 1-acyl-sn-glycero-2,3-cyclic phosphate + choline. The enzyme catalyses a 1-acyl-sn-glycero-3-phosphoethanolamine = a 1-acyl-sn-glycero-2,3-cyclic phosphate + ethanolamine. Its function is as follows. Dermonecrotic toxins cleave the phosphodiester linkage between the phosphate and headgroup of certain phospholipids (sphingolipid and lysolipid substrates), forming an alcohol (often choline) and a cyclic phosphate. This toxin acts on sphingomyelin (SM). It may also act on ceramide phosphoethanolamine (CPE), lysophosphatidylcholine (LPC) and lysophosphatidylethanolamine (LPE), but not on lysophosphatidylserine (LPS), and lysophosphatidylglycerol (LPG). It acts by transphosphatidylation, releasing exclusively cyclic phosphate products as second products. Induces dermonecrosis, hemolysis, increased vascular permeability, edema, inflammatory response, and platelet aggregation. The sequence is that of Dermonecrotic toxin LsaSicTox-alphaIB2iii from Loxosceles sabina (Tucson recluse spider).